The sequence spans 170 residues: Acetyl-CoA decarbonylase/synthase complex subunit epsilon 2 (170 aa).

Belongs to the CdhB family. Heterotetramer of two alpha and two epsilon subunits. The ACDS complex is made up of alpha, epsilon, beta, gamma and delta subunits with a probable stoichiometry of (alpha(2)epsilon(2))(4)-beta(8)-(gamma(1)delta(1))(8).

It participates in one-carbon metabolism; methanogenesis from acetate. Functionally, part of a complex that catalyzes the reversible cleavage of acetyl-CoA, allowing growth on acetate as sole source of carbon and energy. The alpha-epsilon subcomponent functions as a carbon monoxide dehydrogenase. The precise role of the epsilon subunit is unclear; it may have a stabilizing role within the alpha(2)epsilon(2) component and/or be involved in electron transfer to FAD during a potential FAD-mediated CO oxidation. The protein is Acetyl-CoA decarbonylase/synthase complex subunit epsilon 2 (cdhB2) of Methanosarcina thermophila.